A 237-amino-acid polypeptide reads, in one-letter code: Ribonuclease 3 (237 aa).

The region spanning 4-133 is the RNase III domain; the sequence is LTELEKSLGV…VLAAIYLDKG (130 aa). Glu46 is a Mg(2+) binding site. Residues Asp50 and Glu122 contribute to the active site. Glu122 contacts Mg(2+). The region spanning 160 to 229 is the DRBM domain; the sequence is DYKSRLQELV…AKEALQQFEN (70 aa).

This sequence belongs to the ribonuclease III family. Homodimer. It depends on Mg(2+) as a cofactor.

Its subcellular location is the cytoplasm. It carries out the reaction Endonucleolytic cleavage to 5'-phosphomonoester.. Functionally, digests double-stranded RNA. Involved in the processing of primary rRNA transcript to yield the immediate precursors to the large and small rRNAs (23S and 16S). Processes some mRNAs, and tRNAs when they are encoded in the rRNA operon. Processes pre-crRNA and tracrRNA of type II CRISPR loci if present in the organism. The polypeptide is Ribonuclease 3 (Dehalococcoides mccartyi (strain ATCC BAA-2266 / KCTC 15142 / 195) (Dehalococcoides ethenogenes (strain 195))).